Consider the following 255-residue polypeptide: Large ribosomal subunit protein uL4 (255 aa).

It belongs to the universal ribosomal protein uL4 family. In terms of assembly, part of the 50S ribosomal subunit.

One of the primary rRNA binding proteins, this protein initially binds near the 5'-end of the 23S rRNA. It is important during the early stages of 50S assembly. It makes multiple contacts with different domains of the 23S rRNA in the assembled 50S subunit and ribosome. Functionally, forms part of the polypeptide exit tunnel. This Thermoplasma acidophilum (strain ATCC 25905 / DSM 1728 / JCM 9062 / NBRC 15155 / AMRC-C165) protein is Large ribosomal subunit protein uL4.